The chain runs to 1152 residues: Integrin alpha-M (1152 aa).

A signal peptide spans 1-16; it reads MALRVLLLTALTLCHG. Residues 17–1104 lie on the Extracellular side of the membrane; that stretch reads FNLDTENAMT…TKVEPFEVPN (1088 aa). FG-GAP repeat units follow at residues 18–75 and 76–135; these read NLDT…SCEP and IRLQ…QQPQ. Cys66 and Cys73 are disulfide-bonded. N-linked (GlcNAc...) asparagine glycosylation is present at Asn86. The cysteines at positions 105 and 123 are disulfide-linked. Positions 150–328 constitute a VWFA domain; that stretch reads DIAFLIDGSG…EALKTIQNQL (179 aa). A glycan (N-linked (GlcNAc...) asparagine) is linked at Asn240. FG-GAP repeat units follow at residues 339–390, 391–442, 443–503, 506–564, and 569–629; these read QTGS…STFI, NMTR…TGMW, ESNA…RARW, DAVL…SGIS, and QRIA…FNPR. N-linked (GlcNAc...) asparagine glycosylation is present at Asn391. Residues Asp465, Asp467, Asn469, Asp473, Asp529, Asn531, Asp533, Asp537, Asp592, Asp596, and Asp600 each coordinate Ca(2+). Asn469 carries an N-linked (GlcNAc...) asparagine glycan. Residues Cys654 and Cys711 are joined by a disulfide bond. 3 N-linked (GlcNAc...) asparagine glycosylation sites follow: Asn692, Asn696, and Asn734. Cysteines 770 and 776 form a disulfide. A glycan (N-linked (GlcNAc...) asparagine) is linked at Asn801. A disulfide bond links Cys847 and Cys864. 8 N-linked (GlcNAc...) asparagine glycosylation sites follow: Asn880, Asn900, Asn911, Asn940, Asn946, Asn978, Asn993, and Asn1021. Intrachain disulfides connect Cys998-Cys1022 and Cys1027-Cys1032. N-linked (GlcNAc...) asparagine glycosylation is found at Asn1044, Asn1050, and Asn1075. Residues 1105–1128 form a helical membrane-spanning segment; it reads PLPLIVGSSVGGLLLLALITAALY. The Cytoplasmic portion of the chain corresponds to 1129–1152; that stretch reads KLGFFKRQYKDMMSEGGPPGAEPQ. Residues 1131–1135 carry the GFFKR motif motif; sequence GFFKR.

It belongs to the integrin alpha chain family. As to quaternary structure, heterodimer of an alpha and a beta subunit. ITGAM associates with ITGB2. Found in a complex with CD177 and ITGB2/CD18. Interacts with JAM3. Interacts with THBD. Interacts with complement factor H/CFH; this interaction mediates adhesion of neutrophils to pathogens leading to pathogen clearance. Interacts with TMEM268; this interaction inhibits ITGAM degradation via the endosome-lysosome pathway. In terms of tissue distribution, predominantly expressed in monocytes and granulocytes. Expressed in neutrophils (at protein level).

It localises to the cell membrane. The protein resides in the membrane raft. In terms of biological role, integrin ITGAM/ITGB2 is implicated in various adhesive interactions of monocytes, macrophages and granulocytes as well as in mediating the uptake of complement-coated particles and pathogens. It is identical with CR-3, the receptor for the iC3b fragment of the third complement component. It probably recognizes the R-G-D peptide in C3b. Integrin ITGAM/ITGB2 is also a receptor for fibrinogen, factor X and ICAM1. It recognizes P1 and P2 peptides of fibrinogen gamma chain. Regulates neutrophil migration. In association with beta subunit ITGB2/CD18, required for CD177-PRTN3-mediated activation of TNF primed neutrophils. May regulate phagocytosis-induced apoptosis in extravasated neutrophils. May play a role in mast cell development. Required with TYROBP/DAP12 in microglia to control production of microglial superoxide ions which promote the neuronal apoptosis that occurs during brain development. The chain is Integrin alpha-M (ITGAM) from Homo sapiens (Human).